The following is a 427-amino-acid chain: Glutamate-1-semialdehyde 2,1-aminomutase (427 aa).

An N6-(pyridoxal phosphate)lysine modification is found at K268.

Belongs to the class-III pyridoxal-phosphate-dependent aminotransferase family. HemL subfamily. Pyridoxal 5'-phosphate serves as cofactor.

Its subcellular location is the cytoplasm. The enzyme catalyses (S)-4-amino-5-oxopentanoate = 5-aminolevulinate. It functions in the pathway porphyrin-containing compound metabolism; protoporphyrin-IX biosynthesis; 5-aminolevulinate from L-glutamyl-tRNA(Glu): step 2/2. The polypeptide is Glutamate-1-semialdehyde 2,1-aminomutase (Methanococcus maripaludis (strain C6 / ATCC BAA-1332)).